The primary structure comprises 286 residues: Aquaporin PIP1-3 (286 aa).

M1 is subject to N-acetylmethionine. A disordered region spans residues 1–33 (MEGKEEDVRVGANKFPERQPIGTSAQTDKDYKE). Residues 1-54 (MEGKEEDVRVGANKFPERQPIGTSAQTDKDYKEPPPAPFFEPGELSSWSFYRAG) lie on the Cytoplasmic side of the membrane. A helical transmembrane segment spans residues 55-75 (IAEFIATFLFLYITVLTVMGV). At 76–81 (KRAPNM) the chain is on the extracellular side. The chain crosses the membrane as a helical span at residues 82–102 (CASVGIQGIAWAFGGMIFALV). At 103–132 (YCTAGISGGHINPAVTFGLFLARKLSLTRA) the chain is on the cytoplasmic side. The NPA 1 motif lies at 114–116 (NPA). A helical membrane pass occupies residues 133 to 153 (VFYIVMQCLGAICGAGVVKGF). The Extracellular segment spans residues 154 to 174 (QPNPYQTLGGGANTVAHGYTK). The helical transmembrane segment at 175–195 (GSGLGAEIIGTFVLVYTVFSA) threads the bilayer. Topologically, residues 196–208 (TDAKRSARDSHVP) are cytoplasmic. The helical transmembrane segment at 209–229 (ILAPLPIGFAVFLVHLATIPI) threads the bilayer. Residues 230 to 256 (TGTGINPARSLGAAIIYNKDHAWDDHW) lie on the Extracellular side of the membrane. Residues 235-237 (NPA) carry the NPA 2 motif. A helical transmembrane segment spans residues 257 to 277 (IFWVGPFIGAALAALYHQLVI). Residues 278-286 (RAIPFKSRS) lie on the Cytoplasmic side of the membrane. Phosphoserine is present on S284.

The protein belongs to the MIP/aquaporin (TC 1.A.8) family. PIP (TC 1.A.8.11) subfamily. In terms of tissue distribution, expressed in roots, above ground, ripening fruit, flower buds, green siliques and senescing leaves.

It localises to the cell membrane. Water channel required to facilitate the transport of water across cell membrane. Its function is impaired by Hg(2+). The chain is Aquaporin PIP1-3 (PIP1-3) from Arabidopsis thaliana (Mouse-ear cress).